Reading from the N-terminus, the 197-residue chain is Protein GrpE (197 aa).

Residues 1 to 41 (MSSKEQKTPEGQAPEEIITEQHEEVEAVEPDASAEQVDPRD) form a disordered region.

This sequence belongs to the GrpE family. In terms of assembly, homodimer.

Its subcellular location is the cytoplasm. Participates actively in the response to hyperosmotic and heat shock by preventing the aggregation of stress-denatured proteins, in association with DnaK and GrpE. It is the nucleotide exchange factor for DnaK and may function as a thermosensor. Unfolded proteins bind initially to DnaJ; upon interaction with the DnaJ-bound protein, DnaK hydrolyzes its bound ATP, resulting in the formation of a stable complex. GrpE releases ADP from DnaK; ATP binding to DnaK triggers the release of the substrate protein, thus completing the reaction cycle. Several rounds of ATP-dependent interactions between DnaJ, DnaK and GrpE are required for fully efficient folding. The polypeptide is Protein GrpE (Enterobacter sp. (strain 638)).